Consider the following 109-residue polypeptide: Red pigment-concentrating prohormone (109 aa).

The N-terminal stretch at 1–25 is a signal peptide; sequence MVRRSGVTLLVVALLVVTLMSSVSA. The residue at position 26 (Q26) is a Pyrrolidone carboxylic acid. W33 bears the Tryptophan amide mark. Residues 34-78 form a disordered region; it reads GKRAAGASGSNGGVGEAVSGLHPSVGGAPGGVVPPGSSSPGDSCG. Low complexity-rich tracts occupy residues 49–59 and 67–78; these read EAVSGLHPSVG and PPGSSSPGDSCG.

It belongs to the AKH/HRTH/RPCH family.

It localises to the secreted. In terms of biological role, this hormone adapts the animal to light backgrounds by stimulating concentration of the pigment of its red body-chromatophores. The protein is Red pigment-concentrating prohormone of Callinectes sapidus (Blue crab).